We begin with the raw amino-acid sequence, 701 residues long: Arachidonate 12-lipoxygenase, 12R-type (701 aa).

The region spanning 2–119 (ATYKVKVATG…TLALREATGK (118 aa)) is the PLAT domain. Positions 120-701 (ITADDTLPIL…PVLIENSISI (582 aa)) constitute a Lipoxygenase domain. 5 residues coordinate Fe cation: histidine 398, histidine 403, histidine 578, asparagine 582, and isoleucine 701.

It belongs to the lipoxygenase family. Fe cation is required as a cofactor. In terms of tissue distribution, expressed in skin epidermis and other stratified epithelia including tongue and forestomach. Low levels of expression are found in trachea, brain and lung. Not expressed in intestine, liver, kidney, adipose tissue, muscle or hematopoietic cells.

It localises to the cytoplasm. Its subcellular location is the perinuclear region. The catalysed reaction is 1-O-methyl-(5Z,8Z,11Z,14Z)-eicosatetraenoate + O2 = 1-O-methyl (5Z,8Z,10E,12R,14Z)-hydroperoxyiecosatetraenoate. It carries out the reaction 1-O-methyl-(5Z,8Z,11Z,14Z)-eicosatetraenoate + O2 = 1-O-methyl-8-hydroperoxy-(5Z,9E,11Z,14Z)-eicosatetraenoate. It catalyses the reaction (5Z,8Z,11Z,14Z)-eicosatetraenoate + O2 = (12R)-hydroperoxy-(5Z,8Z,10E,14Z)-eicosatetraenoate. The enzyme catalyses N-[omega-(9Z,12Z)-octadecadienoyloxy]acyl-beta-D-glucosyl-(1&lt;-&gt;1)-octadecasphing-4E-enine + O2 = N-[omega-(9R)-hydroperoxy-(10E,12Z)-octadecadienoyloxy]acyl-beta-D-glucosyl-(1&lt;-&gt;1)-octadecasphing-4E-enine. The catalysed reaction is a N-[omega-(9Z,12Z)-octadecadienoyloxy]-acylsphin-4E-enine + O2 = a N-[omega-(9R)-hydroperoxy-(10E,12Z)-octadecadienoyloxy]-acylsphin-4E-enine. It carries out the reaction (6Z,9Z,12Z)-octadecatrienoate + O2 = 10-hydroperoxy-(6Z,8E,12Z)-octadecatrienoate. It catalyses the reaction (4Z,7Z,10Z,13Z,16Z,19Z)-docosahexaenoate + O2 = 14-hydroperoxy-(4Z,7Z,10Z,12E,16Z,19Z)-docosahexaenoate. The enzyme catalyses (8Z,11Z,14Z)-eicosatrienoate + O2 = (8Z,10E,14Z)-12-hydroperoxyeicosatrienoate. The catalysed reaction is (5Z,8Z,11Z,14Z,17Z)-eicosapentaenoate + O2 = (5Z,7Z,8Z,10E,14Z,17Z)-12-hydroperoxyeicosapentaenoate. It carries out the reaction (6Z,9Z,12Z)-octadecatrienoate + O2 = 10R-hydroperoxy-(6Z,8E,12Z)-octadecatrienoate. It catalyses the reaction 1-O-methyl-(5Z,8Z,11Z,14Z)-eicosatetraenoate + O2 = 1-O-methyl-(8R)-hydroperoxy-(5Z,9E,11Z,14Z)-eicosatrienoate. The enzyme catalyses 1-O-methyl-(9Z,12Z)-octadecadienoate + O2 = 1-O-methyl-(9R)-hydroperoxy-(10E,12Z)-octadecadienoate. The catalysed reaction is 1-O-methyl-20-hydroxy-(5Z,8Z,11Z,14Z)-eicosatetraenoate + O2 = 1-O-methyl-8-hydroperoxy-20-hydroxy-(5Z,9E,11Z,14Z)-eicosatetraenoate. It carries out the reaction 1-O-methyl-20-hydroxy-(5Z,8Z,11Z,14Z)-eicosatetraenoate + O2 = 1-O-methyl-12-hydroperoxy-20-hydroxy-(5Z,8Z,10E,14Z)-eicosatetraenoate. It catalyses the reaction 1-O-methyl-20-hydroxy-(5Z,8Z,11Z,14Z)-eicosatetraenoate + O2 = 1-O-methyl-9-hydroperoxy-20-hydroxy-(5Z,7E,11Z,14Z)-eicosatetraenoate. The enzyme catalyses 1-O-methyl-(9Z,12Z)-octadecadienoate + O2 = 1-O-methyl-(13S)-hydroperoxy-(9Z,11E)-octadecadienoate. Its pathway is lipid metabolism; hydroperoxy eicosatetraenoic acid biosynthesis. It functions in the pathway lipid metabolism; sphingolipid metabolism. Increased by calcium. Its function is as follows. Catalyzes the regio and stereo-specific incorporation of a single molecule of dioxygen into free and esterified polyunsaturated fatty acids generating lipid hydroperoxides that can be further reduced to the corresponding hydroxy species. Does not convert arachidonic acid to (12R)-hydroperoxyeicosatetraenoic acid/(12R)-HPETE. In the skin, acts upstream of ALOXE3 on the lineolate moiety of esterified omega-hydroxyacyl-sphingosine (EOS) ceramides to produce an epoxy-ketone derivative, a crucial step in the conjugation of omega-hydroxyceramide to membrane proteins. Therefore plays a crucial role in the synthesis of corneocytes lipid envelope and the establishment of the skin barrier to water loss. May also play a role in the regulation of the expression of airway mucins. The protein is Arachidonate 12-lipoxygenase, 12R-type of Mus musculus (Mouse).